We begin with the raw amino-acid sequence, 352 residues long: Maleylacetate reductase (352 aa).

Belongs to the iron-containing alcohol dehydrogenase family.

It catalyses the reaction 3-oxoadipate + NAD(+) = maleylacetate + NADH + H(+). The catalysed reaction is 3-oxoadipate + NADP(+) = maleylacetate + NADPH + H(+). It functions in the pathway aromatic compound metabolism; 3-chlorocatechol degradation. This chain is Maleylacetate reductase (clcE), found in Pseudomonas knackmussii (strain DSM 6978 / CCUG 54928 / LMG 23759 / B13).